We begin with the raw amino-acid sequence, 280 residues long: Nucleotide-binding protein Dgeo_0723 (280 aa).

8–15 (GLSGSGKS) contributes to the ATP binding site. 57-60 (DART) serves as a coordination point for GTP.

It belongs to the RapZ-like family.

Its function is as follows. Displays ATPase and GTPase activities. The chain is Nucleotide-binding protein Dgeo_0723 from Deinococcus geothermalis (strain DSM 11300 / CIP 105573 / AG-3a).